The chain runs to 397 residues: Riboflavin biosynthesis protein RibBA (397 aa).

The segment at 1-199 is DHBP synthase; that stretch reads MFHRIEEALE…IEDLIAYRRH (199 aa). Residues 26–27, Asp31, 138–142, and Glu162 contribute to the D-ribulose 5-phosphate site; these read RE and RAGHT. Glu27 serves as a coordination point for Mg(2+). Residue His141 coordinates Mg(2+). The GTP cyclohydrolase II stretch occupies residues 200-397; the sequence is HETLVTREVE…VNKLGHLLNL (198 aa). 250-254 contributes to the GTP binding site; it reads RVHSE. The Zn(2+) site is built by Cys255, Cys266, and Cys268. Residues Gln271, 293-295, and Thr315 contribute to the GTP site; that span reads EGR. Asp327 functions as the Proton acceptor; for GTP cyclohydrolase activity in the catalytic mechanism. Arg329 serves as the catalytic Nucleophile; for GTP cyclohydrolase activity. GTP contacts are provided by Thr350 and Lys355.

The protein in the N-terminal section; belongs to the DHBP synthase family. It in the C-terminal section; belongs to the GTP cyclohydrolase II family. Mg(2+) serves as cofactor. It depends on Mn(2+) as a cofactor. The cofactor is Zn(2+).

It carries out the reaction D-ribulose 5-phosphate = (2S)-2-hydroxy-3-oxobutyl phosphate + formate + H(+). The enzyme catalyses GTP + 4 H2O = 2,5-diamino-6-hydroxy-4-(5-phosphoribosylamino)-pyrimidine + formate + 2 phosphate + 3 H(+). The protein operates within cofactor biosynthesis; riboflavin biosynthesis; 2-hydroxy-3-oxobutyl phosphate from D-ribulose 5-phosphate: step 1/1. It functions in the pathway cofactor biosynthesis; riboflavin biosynthesis; 5-amino-6-(D-ribitylamino)uracil from GTP: step 1/4. Its function is as follows. Catalyzes the conversion of D-ribulose 5-phosphate to formate and 3,4-dihydroxy-2-butanone 4-phosphate. In terms of biological role, catalyzes the conversion of GTP to 2,5-diamino-6-ribosylamino-4(3H)-pyrimidinone 5'-phosphate (DARP), formate and pyrophosphate. The chain is Riboflavin biosynthesis protein RibBA from Bacillus cereus (strain B4264).